Reading from the N-terminus, the 189-residue chain is Small ribosomal subunit protein uS7 (189 aa).

Belongs to the universal ribosomal protein uS7 family. Component of the small ribosomal subunit.

It localises to the cytoplasm. This is Small ribosomal subunit protein uS7 (RPS5) from Encephalitozoon cuniculi (strain GB-M1) (Microsporidian parasite).